Consider the following 409-residue polypeptide: Salivary endonuclease (409 aa).

The signal sequence occupies residues 1–20; that stretch reads MHLQLNLCAILLSVLNGIQG. Asn-37 and Asn-102 each carry an N-linked (GlcNAc...) asparagine glycan. The active-site Proton acceptor is His-216. Asn-246 serves as a coordination point for Mg(2+). N-linked (GlcNAc...) asparagine glycans are attached at residues Asn-351 and Asn-381.

It belongs to the DNA/RNA non-specific endonuclease family. Mg(2+) serves as cofactor. As to expression, salivary gland.

The protein resides in the secreted. Its function is as follows. Hydrolyzes single-stranded and double-stranded DNA with little sequence specificity. Inhibits contact pathway of blood coagulation in the host by preventing activation of coagulation factor XII (F12) triggered by soluble DNA. Modestly up-regulates expression of CSF2, CXCL1 and CXCL8 in cultured human dermal microvascular endothelial cells. At higher doses promotes host neutrophil recruitment at the injection site in mouse model. In terms of biological role, (Microbial infection) Increases Leishmania major survival in the host by disrupting parasite-induced neutrophil extracellular traps. Exacerbates L.major parasite infectivity and increases cutaneous lesions in mouse model. This chain is Salivary endonuclease, found in Lutzomyia longipalpis (Sand fly).